We begin with the raw amino-acid sequence, 339 residues long: Phosphate acyltransferase (339 aa).

It belongs to the PlsX family. In terms of assembly, homodimer. Probably interacts with PlsY.

The protein localises to the cytoplasm. The catalysed reaction is a fatty acyl-[ACP] + phosphate = an acyl phosphate + holo-[ACP]. It functions in the pathway lipid metabolism; phospholipid metabolism. Catalyzes the reversible formation of acyl-phosphate (acyl-PO(4)) from acyl-[acyl-carrier-protein] (acyl-ACP). This enzyme utilizes acyl-ACP as fatty acyl donor, but not acyl-CoA. In Helicobacter pylori (strain Shi470), this protein is Phosphate acyltransferase.